We begin with the raw amino-acid sequence, 203 residues long: FMN-dependent NADH:quinone oxidoreductase 1 (203 aa).

FMN is bound by residues Ser9, 15 to 17 (SAS), 95 to 98 (MYNF), and 139 to 142 (TAGG).

The protein belongs to the azoreductase type 1 family. In terms of assembly, homodimer. FMN is required as a cofactor.

It catalyses the reaction 2 a quinone + NADH + H(+) = 2 a 1,4-benzosemiquinone + NAD(+). It carries out the reaction N,N-dimethyl-1,4-phenylenediamine + anthranilate + 2 NAD(+) = 2-(4-dimethylaminophenyl)diazenylbenzoate + 2 NADH + 2 H(+). Quinone reductase that provides resistance to thiol-specific stress caused by electrophilic quinones. Its function is as follows. Also exhibits azoreductase activity. Catalyzes the reductive cleavage of the azo bond in aromatic azo compounds to the corresponding amines. This chain is FMN-dependent NADH:quinone oxidoreductase 1, found in Pseudomonas putida (strain ATCC 47054 / DSM 6125 / CFBP 8728 / NCIMB 11950 / KT2440).